Here is a 295-residue protein sequence, read N- to C-terminus: Cyclic dipyrimidine nucleotide synthase CdnE (295 aa).

The segment at 1-28 (MAKYTEDQLTSWTKPPSDSEQTKLENSE) is disordered. The segment covering 7 to 19 (DQLTSWTKPPSDS) has biased composition (polar residues). UTP contacts are provided by Gln-51 and Ser-53. A Mg(2+)-binding site is contributed by Asp-67. Residues Lys-123, Asn-169, Arg-197, Phe-217, and Lys-276 each coordinate UTP. A Pyrimidine specificity motif (R/Q)xW in donor pocket motif is present at residues 275 to 277 (RKW).

It belongs to the CD-NTase family. E02 subfamily. As to quaternary structure, monomer. Mg(2+) serves as cofactor.

The enzyme catalyses 2 UTP = c-di-UMP + 2 diphosphate. The catalysed reaction is UTP + CTP = cyclic CMP-UMP + 2 diphosphate. Cyclic nucleotide synthase (second messenger synthase) of a CBASS antivirus system. CBASS (cyclic oligonucleotide-based antiphage signaling system) provides immunity against bacteriophage. The CD-NTase protein synthesizes cyclic nucleotides in response to infection; these serve as specific second messenger signals. The signals activate a diverse range of effectors, leading to bacterial cell death and thus abortive phage infection. A type I-B(UU) CBASS system. This Cecembia lonarensis (strain CCUG 58316 / KCTC 22772 / LW9) protein is Cyclic dipyrimidine nucleotide synthase CdnE.